A 193-amino-acid chain; its full sequence is Putative kinase protein 029R (193 aa).

9–17 is a binding site for ATP; it reads GIIGSGKSS. Glutamate 31, tyrosine 43, and glutamine 54 together coordinate substrate. Glutamate 78 serves as the catalytic Proton acceptor. Arginine 79 and glutamate 142 together coordinate substrate.

This sequence belongs to the DCK/DGK family.

This chain is Putative kinase protein 029R, found in Aedes vexans (Inland floodwater mosquito).